An 80-amino-acid chain; its full sequence is Exodeoxyribonuclease 7 small subunit (80 aa).

This sequence belongs to the XseB family. Heterooligomer composed of large and small subunits.

The protein resides in the cytoplasm. The catalysed reaction is Exonucleolytic cleavage in either 5'- to 3'- or 3'- to 5'-direction to yield nucleoside 5'-phosphates.. Functionally, bidirectionally degrades single-stranded DNA into large acid-insoluble oligonucleotides, which are then degraded further into small acid-soluble oligonucleotides. In Phenylobacterium zucineum (strain HLK1), this protein is Exodeoxyribonuclease 7 small subunit.